Consider the following 217-residue polypeptide: Probable transaldolase (217 aa).

The active-site Schiff-base intermediate with substrate is the lysine 83.

The protein belongs to the transaldolase family. Type 3B subfamily.

It is found in the cytoplasm. The catalysed reaction is D-sedoheptulose 7-phosphate + D-glyceraldehyde 3-phosphate = D-erythrose 4-phosphate + beta-D-fructose 6-phosphate. Its pathway is carbohydrate degradation; pentose phosphate pathway; D-glyceraldehyde 3-phosphate and beta-D-fructose 6-phosphate from D-ribose 5-phosphate and D-xylulose 5-phosphate (non-oxidative stage): step 2/3. Functionally, transaldolase is important for the balance of metabolites in the pentose-phosphate pathway. This chain is Probable transaldolase, found in Clostridium botulinum (strain Okra / Type B1).